Consider the following 459-residue polypeptide: Anthocyanidin 3-O-glucoside 2''-O-glucosyltransferase (459 aa).

The active-site Proton acceptor is the His20. His20 contributes to the an anthocyanidin binding site. The Charge relay role is filled by Asp117. 7 residues coordinate UDP-alpha-D-glucose: Thr138, Val335, Gln337, His352, Trp355, Ser357, and Glu360. Gly375 serves as a coordination point for an anthocyanidin. Asp376 and Gln377 together coordinate UDP-alpha-D-glucose.

This sequence belongs to the UDP-glycosyltransferase family.

The catalysed reaction is an anthocyanidin 3-O-beta-D-glucoside + UDP-alpha-D-glucose = an anthocyanidin 3-O-sophoroside + UDP + 2 H(+). It participates in pigment biosynthesis; anthocyanin biosynthesis. Its function is as follows. Glycosyltransferase that mediates the glucosylation of anthocyanidin 3-O-glucosides to yield anthocyanidin 3-O-sophorosides. 3-O-sophoroside derivatives are required for the color of flowers. This Ipomoea purpurea (Common morning glory) protein is Anthocyanidin 3-O-glucoside 2''-O-glucosyltransferase (3GGT).